The sequence spans 65 residues: Large ribosomal subunit protein bL35 (65 aa).

Disordered regions lie at residues Met1–Lys23 and Gly29–His48. A compositionally biased stretch (basic residues) spans Leu33 to Asp43.

This sequence belongs to the bacterial ribosomal protein bL35 family.

This Desulfatibacillum aliphaticivorans protein is Large ribosomal subunit protein bL35.